The sequence spans 696 residues: Elongation factor G (696 aa).

A tr-type G domain is found at 8–282 (DRTRNIGIMA…AVIDYLPSPL (275 aa)). GTP contacts are provided by residues 17–24 (AHIDAGKT), 81–85 (DTPGH), and 135–138 (NKMD).

This sequence belongs to the TRAFAC class translation factor GTPase superfamily. Classic translation factor GTPase family. EF-G/EF-2 subfamily.

It localises to the cytoplasm. Catalyzes the GTP-dependent ribosomal translocation step during translation elongation. During this step, the ribosome changes from the pre-translocational (PRE) to the post-translocational (POST) state as the newly formed A-site-bound peptidyl-tRNA and P-site-bound deacylated tRNA move to the P and E sites, respectively. Catalyzes the coordinated movement of the two tRNA molecules, the mRNA and conformational changes in the ribosome. This chain is Elongation factor G, found in Staphylococcus saprophyticus subsp. saprophyticus (strain ATCC 15305 / DSM 20229 / NCIMB 8711 / NCTC 7292 / S-41).